We begin with the raw amino-acid sequence, 365 residues long: MILKKLSVLNYKNILQSEVIFSPKMNCFFGNNGMGKTNLLDAIHYLSFCKSHVNTPDSQIINSDQDLCVVQGNYDYEGREEEIFCAMRRRQRKQFKRNKKEYDKLSEHIGLLPLVMVSPADADLIRGGSDERRRFLDLIISQQDKPYLHALIQYNKALLQRNTLLKDQSMDASLYEVLEMQLGMYGQIVYEKRKKLVEDFTPIFNEYYQTICGSAEEVGLHYISQLEETELAGKLAMSRERDRILGYTSSGIHKDELEMTLGGYLIRRVGSQGQNKTYLIALKLAQFAFLNKRGQTTPILLLDDIFDKLDASRVEQIIKLVSENGFGQIFITDTNRKYLDEILLAMNHDYALFRVERGEVQPMEE.

ATP is bound at residue 30-37 (GNNGMGKT).

This sequence belongs to the RecF family.

Its subcellular location is the cytoplasm. The RecF protein is involved in DNA metabolism; it is required for DNA replication and normal SOS inducibility. RecF binds preferentially to single-stranded, linear DNA. It also seems to bind ATP. The chain is DNA replication and repair protein RecF from Parabacteroides distasonis (strain ATCC 8503 / DSM 20701 / CIP 104284 / JCM 5825 / NCTC 11152).